Reading from the N-terminus, the 273-residue chain is Proteasome subunit beta type-10 (273 aa).

The residue at position 1 (Met-1) is an N-acetylmethionine. A propeptide spans 1–39 (MQKTVLEPQRGFSFENCERNAALQRALPGLRVPHARKTG) (removed in mature form). The active-site Nucleophile is the Thr-40. Ser-230 is modified (phosphoserine).

The protein belongs to the peptidase T1B family. As to quaternary structure, the 26S proteasome consists of a 20S proteasome core and two 19S regulatory subunits. The 20S proteasome core is composed of 28 subunits that are arranged in four stacked rings, resulting in a barrel-shaped structure. The two end rings are each formed by seven alpha subunits, and the two central rings are each formed by seven beta subunits. The catalytic chamber with the active sites is on the inside of the barrel. Component of the immunoproteasome, where it displaces the equivalent housekeeping subunit PSMB7. Component of the spermatoproteasome, a form of the proteasome specifically found in testis. Post-translationally, autocleaved. The resulting N-terminal Thr residue of the mature subunit is responsible for the nucleophile proteolytic activity.

The protein resides in the cytoplasm. It localises to the nucleus. The catalysed reaction is Cleavage of peptide bonds with very broad specificity.. The proteasome is a multicatalytic proteinase complex which is characterized by its ability to cleave peptides with Arg, Phe, Tyr, Leu, and Glu adjacent to the leaving group at neutral or slightly basic pH. The proteasome has an ATP-dependent proteolytic activity. This subunit is involved in antigen processing to generate class I binding peptides. In Bos taurus (Bovine), this protein is Proteasome subunit beta type-10 (PSMB10).